A 364-amino-acid chain; its full sequence is Methylthioribose-1-phosphate isomerase (364 aa).

The active-site Proton donor is D254.

Belongs to the eIF-2B alpha/beta/delta subunits family. MtnA subfamily.

Its subcellular location is the cytoplasm. The protein resides in the nucleus. It carries out the reaction 5-(methylsulfanyl)-alpha-D-ribose 1-phosphate = 5-(methylsulfanyl)-D-ribulose 1-phosphate. It functions in the pathway amino-acid biosynthesis; L-methionine biosynthesis via salvage pathway; L-methionine from S-methyl-5-thio-alpha-D-ribose 1-phosphate: step 1/6. Catalyzes the interconversion of methylthioribose-1-phosphate (MTR-1-P) into methylthioribulose-1-phosphate (MTRu-1-P). The chain is Methylthioribose-1-phosphate isomerase from Drosophila melanogaster (Fruit fly).